A 182-amino-acid chain; its full sequence is Large ribosomal subunit protein uL10 (182 aa).

It belongs to the universal ribosomal protein uL10 family. Part of the ribosomal stalk of the 50S ribosomal subunit. The N-terminus interacts with L11 and the large rRNA to form the base of the stalk. The C-terminus forms an elongated spine to which L12 dimers bind in a sequential fashion forming a multimeric L10(L12)X complex.

Its function is as follows. Forms part of the ribosomal stalk, playing a central role in the interaction of the ribosome with GTP-bound translation factors. This chain is Large ribosomal subunit protein uL10, found in Gluconacetobacter diazotrophicus (strain ATCC 49037 / DSM 5601 / CCUG 37298 / CIP 103539 / LMG 7603 / PAl5).